The following is a 66-amino-acid chain: Large ribosomal subunit protein bL35 (66 aa).

The interval 20 to 40 (GKVKHAQRGKRHGMIKRTKKQ) is disordered.

The protein belongs to the bacterial ribosomal protein bL35 family.

The sequence is that of Large ribosomal subunit protein bL35 from Nitrobacter winogradskyi (strain ATCC 25391 / DSM 10237 / CIP 104748 / NCIMB 11846 / Nb-255).